A 488-amino-acid polypeptide reads, in one-letter code: Proline--tRNA ligase (488 aa).

This sequence belongs to the class-II aminoacyl-tRNA synthetase family. ProS type 3 subfamily. In terms of assembly, homodimer.

The protein resides in the cytoplasm. The enzyme catalyses tRNA(Pro) + L-proline + ATP = L-prolyl-tRNA(Pro) + AMP + diphosphate. In terms of biological role, catalyzes the attachment of proline to tRNA(Pro) in a two-step reaction: proline is first activated by ATP to form Pro-AMP and then transferred to the acceptor end of tRNA(Pro). This Pyrobaculum arsenaticum (strain DSM 13514 / JCM 11321 / PZ6) protein is Proline--tRNA ligase.